The chain runs to 143 residues: ATP synthase subunit b' (143 aa).

The chain crosses the membrane as a helical span at residues 6–26 (ATLPFMALQFLLLAAVLNAIF).

The protein belongs to the ATPase B chain family. In terms of assembly, F-type ATPases have 2 components, F(1) - the catalytic core - and F(0) - the membrane proton channel. F(1) has five subunits: alpha(3), beta(3), gamma(1), delta(1), epsilon(1). F(0) has four main subunits: a(1), b(1), b'(1) and c(10-14). The alpha and beta chains form an alternating ring which encloses part of the gamma chain. F(1) is attached to F(0) by a central stalk formed by the gamma and epsilon chains, while a peripheral stalk is formed by the delta, b and b' chains.

It is found in the cellular thylakoid membrane. In terms of biological role, f(1)F(0) ATP synthase produces ATP from ADP in the presence of a proton or sodium gradient. F-type ATPases consist of two structural domains, F(1) containing the extramembraneous catalytic core and F(0) containing the membrane proton channel, linked together by a central stalk and a peripheral stalk. During catalysis, ATP synthesis in the catalytic domain of F(1) is coupled via a rotary mechanism of the central stalk subunits to proton translocation. Its function is as follows. Component of the F(0) channel, it forms part of the peripheral stalk, linking F(1) to F(0). The b'-subunit is a diverged and duplicated form of b found in plants and photosynthetic bacteria. This Nostoc punctiforme (strain ATCC 29133 / PCC 73102) protein is ATP synthase subunit b'.